A 209-amino-acid polypeptide reads, in one-letter code: uncharacterized protein (209 aa).

May influence the expression of the nuc gene. This is an uncharacterized protein from Shigella flexneri.